The sequence spans 187 residues: Adenylate kinase (187 aa).

10–15 (GSGKGT) provides a ligand contact to ATP. Residues 30 to 59 (STGDLLRAEVAAGSPLGLKAKEVMARGDLV) are NMP. Residues Thr31, Arg36, 57-59 (DLV), 85-88 (GYPR), and Gln92 each bind AMP. Residues 126 to 136 (GRAKAEGREDD) form an LID region. Arg127 lines the ATP pocket. The AMP site is built by Arg133 and Arg144. Gly172 provides a ligand contact to ATP.

It belongs to the adenylate kinase family. As to quaternary structure, monomer.

It localises to the cytoplasm. The enzyme catalyses AMP + ATP = 2 ADP. It functions in the pathway purine metabolism; AMP biosynthesis via salvage pathway; AMP from ADP: step 1/1. In terms of biological role, catalyzes the reversible transfer of the terminal phosphate group between ATP and AMP. Plays an important role in cellular energy homeostasis and in adenine nucleotide metabolism. This Xanthomonas axonopodis pv. citri (strain 306) protein is Adenylate kinase.